We begin with the raw amino-acid sequence, 474 residues long: Fumarate hydratase class II (474 aa).

Substrate contacts are provided by residues 104–106 (SGT), 128–131 (HPND), 138–140 (SSN), and threonine 186. The active-site Proton donor/acceptor is the histidine 187. Serine 318 is a catalytic residue. Substrate-binding positions include serine 319 and 324–326 (KVN).

Belongs to the class-II fumarase/aspartase family. Fumarase subfamily. As to quaternary structure, homotetramer.

The protein localises to the cytoplasm. The enzyme catalyses (S)-malate = fumarate + H2O. Its pathway is carbohydrate metabolism; tricarboxylic acid cycle; (S)-malate from fumarate: step 1/1. Functionally, involved in the TCA cycle. Catalyzes the stereospecific interconversion of fumarate to L-malate. This chain is Fumarate hydratase class II, found in Mycobacterium bovis (strain ATCC BAA-935 / AF2122/97).